A 199-amino-acid chain; its full sequence is Peptidyl-tRNA hydrolase (199 aa).

Position 15 (Tyr-15) interacts with tRNA. The active-site Proton acceptor is His-20. TRNA is bound by residues Tyr-66, Asn-68, and Asn-114.

This sequence belongs to the PTH family. As to quaternary structure, monomer.

It is found in the cytoplasm. It carries out the reaction an N-acyl-L-alpha-aminoacyl-tRNA + H2O = an N-acyl-L-amino acid + a tRNA + H(+). Its function is as follows. Hydrolyzes ribosome-free peptidyl-tRNAs (with 1 or more amino acids incorporated), which drop off the ribosome during protein synthesis, or as a result of ribosome stalling. Functionally, catalyzes the release of premature peptidyl moieties from peptidyl-tRNA molecules trapped in stalled 50S ribosomal subunits, and thus maintains levels of free tRNAs and 50S ribosomes. This chain is Peptidyl-tRNA hydrolase, found in Burkholderia cenocepacia (strain HI2424).